The primary structure comprises 243 residues: 2,3-bisphosphoglycerate-dependent phosphoglycerate mutase (243 aa).

Substrate-binding positions include Arg-8–Asn-15, Thr-21–Gly-22, Arg-60, Glu-87–Tyr-90, Lys-98, Arg-114–Arg-115, and Gly-183–Asn-184. Residue His-9 is the Tele-phosphohistidine intermediate of the active site. Glu-87 functions as the Proton donor/acceptor in the catalytic mechanism.

Belongs to the phosphoglycerate mutase family. BPG-dependent PGAM subfamily. Homodimer.

The enzyme catalyses (2R)-2-phosphoglycerate = (2R)-3-phosphoglycerate. It participates in carbohydrate degradation; glycolysis; pyruvate from D-glyceraldehyde 3-phosphate: step 3/5. Catalyzes the interconversion of 2-phosphoglycerate and 3-phosphoglycerate. The sequence is that of 2,3-bisphosphoglycerate-dependent phosphoglycerate mutase from Maricaulis maris (strain MCS10) (Caulobacter maris).